The primary structure comprises 946 residues: MAAHGKLRRERGLQAEYETQVKEMRWQLSEQLRCLELQGELRRELLQELAEFMRRRAEVELEYSRGLEKLAERFSSRGGRLGSSREHQSFRKEPSLLSPLHCWAVLLQHTRQQSRESAALSEVLAGPLAQRLSHIAEDVGRLVKKSRDLEQQLQDELLEVVSELQTAKKTYQAYHMESVNAEAKLREAERQEEKRAGRSVPTTTAGATEAGPLRKSSLKKGGRLVEKRQAKFMEHKLKCTKARNEYLLSLASVNAAVSNYYLHDVLDLMDCCDTGFHLALGQVLRSYTAAESRTQASQVQGLGSLEEAVEALDPPGDKAKVLEVHATVFCPPLRFDYHPHDGDEVAEICVEMELRDEILPRAQNIQSRLDRQTIETEEVNKTLKATLQALLEVVASDDGDVLDSFQTSPSTESLKSTSSDPGSRQAGRRRGQQQETETFYLTKLQEYLSGRSILAKLQAKHEKLQEALQRGDKEEQEVSWTQYTQRKFQKSRQPRPSSQYNQRLFGGDMEKFIQSSGQPVPLVVESCIRFINLNGLQHEGIFRVSGAQLRVSEIRDAFERGEDPLVEGCTAHDLDSVAGVLKLYFRSLEPPLFPPDLFGELLASSELEATAERVEHVSRLLWRLPAPVLVVLRYLFTFLNHLAQYSDENMMDPYNLAVCFGPTLLPVPAGQDPVALQGRVNQLVQTLIVQPDRVFPPLTSLPGPVYEKCMAPPSASCLGDAQLESLGADNEPELEAEMPAQEDDLEGVVEAVACFAYTGRTAQELSFRRGDVLRLHERASSDWWRGEHNGMRGLIPHKYITLPAGTEKQVVGAGLQTAGESGSSPEGLLASELVHRPEPCTSPEAMGPSGHRRRCLVPASPEQHVEVDKAVAQNMDSVFKELLGKTSVRQGLGPASTTSPSPGPRSPKAPPSSRLGRNKGFSRGPGAPASPSASHPQGLDTTPKPH.

An F-BAR domain is found at 19–317; sequence TQVKEMRWQL…AVEALDPPGD (299 aa). Residues 128–195 adopt a coiled-coil conformation; sequence LAQRLSHIAE…REAERQEEKR (68 aa). The segment covering 187 to 196 has biased composition (basic and acidic residues); it reads EAERQEEKRA. 2 disordered regions span residues 187-220 and 402-435; these read EAERQEEKRAGRSVPTTTAGATEAGPLRKSSLKK and LDSFQTSPSTESLKSTSSDPGSRQAGRRRGQQQE. 2 stretches are compositionally biased toward low complexity: residues 202–211 and 407–419; these read TTTAGATEAG and TSPSTESLKSTSS. Positions 507–695 constitute a Rho-GAP domain; that stretch reads GDMEKFIQSS…TLIVQPDRVF (189 aa). In terms of domain architecture, SH3 spans 746 to 805; that stretch reads EGVVEAVACFAYTGRTAQELSFRRGDVLRLHERASSDWWRGEHNGMRGLIPHKYITLPAG. A phosphoserine mark is found at S860, S901, and S906. Residues 885–946 are disordered; that stretch reads KTSVRQGLGP…QGLDTTPKPH (62 aa). A compositionally biased stretch (pro residues) spans 901–910; the sequence is SPGPRSPKAP. Residues 924–934 are compositionally biased toward low complexity; it reads GPGAPASPSAS.

Interacts with NCKAP1L. As to expression, predominantly in hematopoietic cells (spleen, thymus and leukocytes); low levels in placenta, lung and various fetal tissues.

Its subcellular location is the cytoplasm. Its function is as follows. Inhibitory effect on stress fiber organization. May down-regulate Rho-like GTPase in hematopoietic cells. This Homo sapiens (Human) protein is Rho GTPase-activating protein 4.